An 883-amino-acid polypeptide reads, in one-letter code: MHPFSRLFRNIQSLEEEVQELLGPPEDALPLLAGEDLNHRVADALNLHLPTADLQWVHKTNAITGLYSNQAAQFNPNWIQPEFPELHLHNDLIQKLQQYFGPLTINEKRKLQLNFPARFFPKATKYFPLIKGIKNHYPNFALEHFFATANYLWTLWEAGILYLRKNQTTLTFKGKPYSWEHRQLVQHNGQQHKSHLQSRQNSSMVACSGHLLHNHLSSESVSVSTRNLSNNISDKSQKSTRTGLCSYKQIQTDRLEHLARISCGSKIFIGQQGSSPKTLYKSISSNFRNQTWAYNSSRNSGHTTWFSSASNSNKSRSREKAYSSNSTSKRYSPPLNYEKSDFSSPGVRRRITRLDNNGTPTQCLSRSFYNTKPCGSYCIHHIVSSLDDWGPCTVTGDVTIKSPRTPRRITGGVFLVDKNPNNSSESRLVVHFSQFSRGHTRVHWPKFAVPNLQTLANLLSTNLQWLSLDVSAAFYHIPISPAAVPHLLVGSPGLERFNTCLSSSTHNRNNSQLQTMHNLCTRHVYSSLLLLFKTYGRKLHLLAHPFIMGFRKLPMGVGLSSSLLAQFTSALASMVRRNFPHCVVFAYMDDLVLGARTSEHLTAIYSHICSVFLDLGIHLNVNKTKWWGNHLHFMGYVITSSGVLPQDKHVKKISRYLLSVPVNQPLDYKISERLTGILNYVAPFTLCGYAALMPLYHAIASRMAFIFSSLYKSWLLSLYEELWPVVRQRGVVCTVFADATPTGWGIATTCQLLSGTYAFPLPIATAELIAACLARCWTGARLLGTDNSVVLSGKLTSFPWLLACVATWILRGTSFCYVPSALNPADLPSRGLLPALRPLPRLRLRPQTTRISLWAASPPVSPRAPVRVAWSSPVQTCEPWIPP.

The interval 1-183 (MHPFSRLFRN…GKPYSWEHRQ (183 aa)) is terminal protein domain (TP). Positions 184–386 (LVQHNGQQHK…YCIHHIVSSL (203 aa)) are spacer. The interval 298 to 344 (RNSGHTTWFSSASNSNKSRSREKAYSSNSTSKRYSPPLNYEKSDFSS) is disordered. Positions 387–728 (DDWGPCTVTG…YEELWPVVRQ (342 aa)) are polymerase/reverse transcriptase domain (RT). Residues 397 to 638 (DVTIKSPRTP…NHLHFMGYVI (242 aa)) form the Reverse transcriptase domain. Asp-469, Asp-589, and Asp-590 together coordinate Mg(2+).

It belongs to the hepadnaviridae P protein family.

It catalyses the reaction DNA(n) + a 2'-deoxyribonucleoside 5'-triphosphate = DNA(n+1) + diphosphate. The enzyme catalyses Endonucleolytic cleavage to 5'-phosphomonoester.. Its activity is regulated as follows. Activated by host HSP70 and HSP40 in vitro to be able to bind the epsilon loop of the pgRNA. Because deletion of the RNase H region renders the protein partly chaperone-independent, the chaperones may be needed indirectly to relieve occlusion of the RNA-binding site by this domain. Inhibited by several reverse-transcriptase inhibitors: Lamivudine, Adefovir and Entecavir. Functionally, multifunctional enzyme that converts the viral RNA genome into dsDNA in viral cytoplasmic capsids. This enzyme displays a DNA polymerase activity that can copy either DNA or RNA templates, and a ribonuclease H (RNase H) activity that cleaves the RNA strand of RNA-DNA heteroduplexes in a partially processive 3'- to 5'-endonucleasic mode. Neo-synthesized pregenomic RNA (pgRNA) are encapsidated together with the P protein, and reverse-transcribed inside the nucleocapsid. Initiation of reverse-transcription occurs first by binding the epsilon loop on the pgRNA genome, and is initiated by protein priming, thereby the 5'-end of (-)DNA is covalently linked to P protein. Partial (+)DNA is synthesized from the (-)DNA template and generates the relaxed circular DNA (RC-DNA) genome. After budding and infection, the RC-DNA migrates in the nucleus, and is converted into a plasmid-like covalently closed circular DNA (cccDNA). The activity of P protein does not seem to be necessary for cccDNA generation, and is presumably released from (+)DNA by host nuclear DNA repair machinery. In Woodchuck hepatitis B virus (isolate 2) (WHV), this protein is Protein P.